Here is a 62-residue protein sequence, read N- to C-terminus: Photosystem II reaction center protein Z (62 aa).

A run of 2 helical transmembrane segments spans residues 8–28 and 41–61; these read TLFA…VVFA and LSGL…NSFV.

The protein belongs to the PsbZ family. PSII is composed of 1 copy each of membrane proteins PsbA, PsbB, PsbC, PsbD, PsbE, PsbF, PsbH, PsbI, PsbJ, PsbK, PsbL, PsbM, PsbT, PsbY, PsbZ, Psb30/Ycf12, at least 3 peripheral proteins of the oxygen-evolving complex and a large number of cofactors. It forms dimeric complexes.

The protein resides in the plastid. It localises to the chloroplast thylakoid membrane. Its function is as follows. May control the interaction of photosystem II (PSII) cores with the light-harvesting antenna, regulates electron flow through the 2 photosystem reaction centers. PSII is a light-driven water plastoquinone oxidoreductase, using light energy to abstract electrons from H(2)O, generating a proton gradient subsequently used for ATP formation. This is Photosystem II reaction center protein Z from Stigeoclonium helveticum (Green alga).